We begin with the raw amino-acid sequence, 473 residues long: Ribulose bisphosphate carboxylase large chain 2 (473 aa).

Residues Asn-116 and Thr-166 each coordinate substrate. Lys-168 functions as the Proton acceptor in the catalytic mechanism. Lys-170 provides a ligand contact to substrate. Mg(2+) is bound by residues Lys-194, Asp-196, and Glu-197. Lys-194 is subject to N6-carboxylysine. His-287 (proton acceptor) is an active-site residue. The substrate site is built by Arg-288, His-320, and Ser-372.

It belongs to the RuBisCO large chain family. Type I subfamily. As to quaternary structure, heterohexadecamer of 8 large chains and 8 small chains. It depends on Mg(2+) as a cofactor.

The enzyme catalyses 2 (2R)-3-phosphoglycerate + 2 H(+) = D-ribulose 1,5-bisphosphate + CO2 + H2O. The catalysed reaction is D-ribulose 1,5-bisphosphate + O2 = 2-phosphoglycolate + (2R)-3-phosphoglycerate + 2 H(+). In terms of biological role, ruBisCO catalyzes two reactions: the carboxylation of D-ribulose 1,5-bisphosphate, the primary event in carbon dioxide fixation, as well as the oxidative fragmentation of the pentose substrate. Both reactions occur simultaneously and in competition at the same active site. This chain is Ribulose bisphosphate carboxylase large chain 2, found in Cereibacter sphaeroides (strain ATCC 17025 / ATH 2.4.3) (Rhodobacter sphaeroides).